Consider the following 764-residue polypeptide: WFHGNLSGKEAEKLILERGKNGSFLVRESQSKPGDFVLSVRTDDKVTHVMIRWQDKKYDVGGGESFATLSELIEHYKRHPMVETCGTVVHLRQPFNATRITAAGINARVEQLVKGGFWEEFESLQQDSRDTFSRHEGYKDENRLKNRYHDHTRVKLQDVERSAPGAEYINANYIRLPTDGDLYNMSSSSESLNSTVAACPACTAAQTQRNCPNCHLLNKTCVKCAVKSATLPTNCATCNRKSDSLSKHKRSESMSASANASAAGTGPGTPTAAGNTSAAAALNGCLAVLLKKHCGDASPPPSTTSSCSGPLTGSLLNGEGNQFKTYIATQGCLANTKTDFWNMIWQENTRVIVMTTKEIERGKTKCERYWPDEGQCKQFGHAKVHCIKENSTNDYTLREFLFSWRDKPERRIYHYHFQVWPDHGVPADPGCVLNFLQDVNTKQSSLAQAGEKPGPICVHCSAGIGRTGTFIVIDMILDQIVRNGLDTEIDIQRTIQMVRSQRSGMVQTEAQYKFVYYAVQHYIQTLIARKRAEEQSLQVGREYTNIKYTGEIGNDSQRSPLPPAISNLSLVSCKSAVAEPLTAAAAAAAVAANAGNKHAAKLQPPLPPLGASNNNNSSGNSGSYCNSSSSTSTAQHNGVVSSSNNCSSGSGSANSSNANGNGNILGNGSNMRKSNFYSDSLAALKLQQQQLHDAATAAAAAALASAAAPAATTTAASASAAAAAAAAAKYKNIPKDMNSLRQPHAAYVAAAPALPPPPTPPRKT.

The region spanning Trp1 to Phe95 is the SH2 domain. Residues Phe117–Tyr522 enclose the Tyrosine-protein phosphatase domain. The tract at residues Ile174–Thr325 is PTPase insert (Cys/Ser-rich). Positions Ser246 to Ala273 are disordered. A compositionally biased stretch (low complexity) spans Ser255–Ala273. Residues Asp422, Cys460–Arg466, and Gln507 each bind substrate. The Phosphocysteine intermediate role is filled by Cys460. A disordered region spans residues Ala599–Gly666. Residues Ser612–Gly666 are compositionally biased toward low complexity.

Belongs to the protein-tyrosine phosphatase family. Non-receptor class subfamily.

Its subcellular location is the cytoplasm. The enzyme catalyses O-phospho-L-tyrosyl-[protein] + H2O = L-tyrosyl-[protein] + phosphate. Its function is as follows. Required in all receptor tyrosine kinase signaling pathways. Functions downstream of the receptor tyrosine kinase torso, acting in concert with D-Raf via tailless. Also functions downstream of Egfr (epidermal growth factor receptor) and btl (fibroblast growth factor receptor). The SH2 domain suggests that csw effects its role by mediating heteromeric protein interactions. Maternally required for normal determination of cell fates at the termini of the embryo. Required for cell fate specification of the ventral ectoderm, in the developing embryonic CNS and for embryonic tracheal cell migration. Functions during imaginal development for proper formation of adult structures such as eyes, aristae, L5 wing vein and the tarsal claw. This Drosophila virilis (Fruit fly) protein is Tyrosine-protein phosphatase corkscrew (csw).